A 525-amino-acid chain; its full sequence is Transmembrane protein 184C (525 aa).

Transmembrane regions (helical) follow at residues 17-37 (LLVL…IWKF), 48-68 (SWFI…WGIL), 83-103 (IIRI…ALVY), 121-141 (VIYN…PNLI), 212-232 (YLVI…LLFY), 254-274 (VVFV…LGVI), and 287-307 (AVAT…AAIA). 2 disordered regions span residues 358–394 (PKKK…PSPG) and 483–525 (LFPS…STDP). Positions 373–388 (SSLLSSSSQDLTSGSS) are enriched in low complexity. The span at 483-502 (LFPSTETSENSMIDTSESQQ) shows a compositional bias: polar residues. Low complexity predominate over residues 503 to 525 (ESSDLCTESSDSSTESSDLSTDP).

It belongs to the TMEM184 family.

Its subcellular location is the membrane. Its function is as follows. Possible tumor suppressor which may play a role in cell growth. The sequence is that of Transmembrane protein 184C (Tmem184c) from Mus musculus (Mouse).